We begin with the raw amino-acid sequence, 240 residues long: Probable septum site-determining protein MinC (240 aa).

The protein belongs to the MinC family. Interacts with MinD and FtsZ.

Its function is as follows. Cell division inhibitor that blocks the formation of polar Z ring septums. Rapidly oscillates between the poles of the cell to destabilize FtsZ filaments that have formed before they mature into polar Z rings. Prevents FtsZ polymerization. This chain is Probable septum site-determining protein MinC, found in Acinetobacter baumannii (strain AYE).